The following is a 368-amino-acid chain: Phosphate acyltransferase (368 aa).

The disordered stretch occupies residues 334–368 (EGSLEQAARDASGAGHASPIAGQPAEPYAAQSSKA).

It belongs to the PlsX family. In terms of assembly, homodimer. Probably interacts with PlsY.

It is found in the cytoplasm. It carries out the reaction a fatty acyl-[ACP] + phosphate = an acyl phosphate + holo-[ACP]. Its pathway is lipid metabolism; phospholipid metabolism. Functionally, catalyzes the reversible formation of acyl-phosphate (acyl-PO(4)) from acyl-[acyl-carrier-protein] (acyl-ACP). This enzyme utilizes acyl-ACP as fatty acyl donor, but not acyl-CoA. The sequence is that of Phosphate acyltransferase from Paraburkholderia xenovorans (strain LB400).